Here is a 319-residue protein sequence, read N- to C-terminus: Ankyrin repeat domain-containing protein 1 (319 aa).

A coiled-coil region spans residues Lys61–Ile89. 5 ANK repeats span residues Tyr152–Phe181, Leu185–Ala214, Leu218–Ala247, Glu251–Val280, and Ala284–Arg315.

As to quaternary structure, interacts with TTN/titin and YBX1.

It localises to the nucleus. In terms of biological role, may play an important role in endothelial cell activation. May act as a nuclear transcription factor that negatively regulates the expression of cardiac genes. The sequence is that of Ankyrin repeat domain-containing protein 1 (ANKRD1) from Bos taurus (Bovine).